A 564-amino-acid chain; its full sequence is Aspyridones efflux protein (564 aa).

Residues 1 to 17 (MHPDQADTAAMQQQTTT) are compositionally biased toward low complexity. Residues 1-49 (MHPDQADTAAMQQQTTTECSDRSRPEKAEEGHAREHTVTRTCSREPEQT) form a disordered region. Over residues 19-47 (CSDRSRPEKAEEGHAREHTVTRTCSREPE) the composition is skewed to basic and acidic residues. A run of 10 helical transmembrane segments spans residues 66 to 86 (AICLTIFLISVDFSILATAIP), 127 to 147 (WTFLLALLTFEVGSIICATAP), 158 to 178 (IAGCGNAGLLSGALLILTHSV), 185 to 205 (LFMAMTGGTYGVAAIAGPPLG), 216 to 236 (WCFWINLPIGALTFLVIVFLF), 260 to 280 (VGTLMFMPAIICVLLALQWGG), 287 to 307 (SGIVVALLVVGGVLVIAFGIV), 335 to 355 (FALGAAFFVFIYFLPIWFQGV), 368 to 388 (LPMLVGNIVATAVSGVLVTII), and 392 to 412 (APFMILGTILASVGAGLLLLF). N-linked (GlcNAc...) asparagine glycosylation is present at Asn415. The next 2 helical transmembrane spans lie at 416 to 436 (VTAASWIGYQAIVGLGIGFGW) and 454 to 474 (IATATLSFAQTLGGTLFVSVA). Residue Asn524 is glycosylated (N-linked (GlcNAc...) asparagine). A helical membrane pass occupies residues 528–548 (LSAFFVATIMAIMSLVGCTFV).

It belongs to the major facilitator superfamily. TCR/Tet family.

It is found in the cell membrane. In terms of biological role, efflux pump that may be involved in the secretion of leporins. The sequence is that of Aspyridones efflux protein (TP) from Neocamarosporium betae (Beet black rot fungus).